The following is a 100-amino-acid chain: Protamine-2 (100 aa).

Residues 1–45 form a disordered region; sequence MVRYHVRSPSERPHREYRQLVNGQEQGRHGQEEQGMSAEGVEGYG. Residues S8, S10, and S37 each carry the phosphoserine modification. Residues 8 to 18 show a composition bias toward basic and acidic residues; sequence SPSERPHREYR.

Belongs to the protamine P2 family. In terms of assembly, interacts with TDRP. In terms of processing, proteolytic processing into mature chains is required for histone eviction during spermatogenesis. Transition proteins (TNP1 and TNP2) are required for processing. As to expression, testis.

Its subcellular location is the nucleus. It is found in the chromosome. In terms of biological role, protamines substitute for histones in the chromatin of sperm during the haploid phase of spermatogenesis. They compact sperm DNA into a highly condensed, stable and inactive complex. This Alouatta seniculus (Red howler monkey) protein is Protamine-2 (PRM2).